The following is a 63-amino-acid chain: Large ribosomal subunit protein uL29 (63 aa).

The protein belongs to the universal ribosomal protein uL29 family.

This chain is Large ribosomal subunit protein uL29, found in Tolumonas auensis (strain DSM 9187 / NBRC 110442 / TA 4).